A 272-amino-acid polypeptide reads, in one-letter code: Indole-3-glycerol phosphate synthase (272 aa).

This sequence belongs to the TrpC family.

It catalyses the reaction 1-(2-carboxyphenylamino)-1-deoxy-D-ribulose 5-phosphate + H(+) = (1S,2R)-1-C-(indol-3-yl)glycerol 3-phosphate + CO2 + H2O. Its pathway is amino-acid biosynthesis; L-tryptophan biosynthesis; L-tryptophan from chorismate: step 4/5. This is Indole-3-glycerol phosphate synthase from Mycobacterium ulcerans (strain Agy99).